Consider the following 187-residue polypeptide: Putative type I specificity subunit S.MpnORF289P N-terminus (187 aa).

This sequence belongs to the type-I restriction system S methylase family. In terms of assembly, the methyltransferase is composed of M and S polypeptides.

Its function is as follows. The N-terminal section of a specificity (S) subunit of a type I methyltransferase (MTase); this subunit dictates DNA sequence specificity. The single R subunit has multiple frameshifts and is probably not expressed. This is Putative type I specificity subunit S.MpnORF289P N-terminus from Mycoplasma pneumoniae (strain ATCC 29342 / M129 / Subtype 1) (Mycoplasmoides pneumoniae).